The chain runs to 388 residues: L-lactate dehydrogenase (388 aa).

The FMN hydroxy acid dehydrogenase domain maps to 1–380 (MIISAASDYR…SADALSRVTR (380 aa)). Tyr24 contacts substrate. Ser106 and Gln127 together coordinate FMN. Tyr129 contributes to the substrate binding site. FMN is bound at residue Thr155. Residue Arg164 coordinates substrate. Lys251 lines the FMN pocket. Residue His275 is the Proton acceptor of the active site. Arg278 contributes to the substrate binding site. 306–330 (DSGIRSGLDVVRMLALGADAVLLGR) provides a ligand contact to FMN.

The protein belongs to the FMN-dependent alpha-hydroxy acid dehydrogenase family. It depends on FMN as a cofactor.

Its subcellular location is the cell inner membrane. It catalyses the reaction (S)-lactate + A = pyruvate + AH2. Functionally, catalyzes the conversion of L-lactate to pyruvate. Is coupled to the respiratory chain. The protein is L-lactate dehydrogenase of Xanthomonas axonopodis pv. citri (strain 306).